We begin with the raw amino-acid sequence, 798 residues long: Integrin beta-1-B (798 aa).

The N-terminal stretch at 1–21 is a signal peptide; that stretch reads MARYPVFTFVFLICLVLCTNA. Residues 22–727 lie on the Extracellular side of the membrane; it reads QQGGTECLKA…VKEPECPSGP (706 aa). Residues 27–77 enclose the PSI domain; sequence ECLKANAKSCGECIQAGPNCGWCTKVDFLQEGEPTSARCDDLAALKTKGCP. 28 disulfides stabilise this stretch: Cys28/Cys46, Cys36/Cys464, Cys39/Cys65, Cys49/Cys76, Cys206/Cys212, Cys260/Cys300, Cys400/Cys414, Cys434/Cys462, Cys466/Cys486, Cys477/Cys489, Cys491/Cys500, Cys502/Cys533, Cys516/Cys531, Cys525/Cys536, Cys538/Cys553, Cys555/Cys576, Cys560/Cys574, Cys568/Cys579, Cys581/Cys590, Cys592/Cys615, Cys599/Cys613, Cys607/Cys618, Cys620/Cys630, Cys633/Cys636, Cys640/Cys691, Cys646/Cys665, Cys649/Cys661, and Cys699/Cys723. The tract at residues 77–106 is disordered; the sequence is PEDDIQNPRGRKQKLKDIPITSKGKGERMD. N-linked (GlcNAc...) asparagine glycans are attached at residues Asn109 and Asn131. In terms of domain architecture, VWFA spans 139 to 377; the sequence is DYPIDLYYLM…QLIIDSYNSL (239 aa). Mg(2+) contacts are provided by Ser151 and Ser153. Residues Ser153, Asp156, Asp157, and Glu188 each coordinate Ca(2+). Asn211 and Asn223 each carry an N-linked (GlcNAc...) asparagine glycan. Residues Asn243, Asp245, Pro247, and Glu248 each coordinate Ca(2+). Glu248 contacts Mg(2+). Asn268 and Asn362 each carry an N-linked (GlcNAc...) asparagine glycan. A glycan (N-linked (GlcNAc...) asparagine) is linked at Asn416. I-EGF domains lie at 466-501, 502-554, 555-591, and 592-631; these read CQDKGTPNSPECHFGNGTFECGACRCNEGRIGKECE, CSTD…KYCE, CDNFNCDRSNGLICGGKGVCKCRVCECFPNYSGSACD, and CSEDTSTCMAKNGQICNGRGICDCGRCKCTDPKFQGPTCE. Residue Asn481 is glycosylated (N-linked (GlcNAc...) asparagine). Asn520 is a glycosylation site (N-linked (GlcNAc...) asparagine). Asn584 carries N-linked (GlcNAc...) asparagine glycosylation. Residue Asn669 is glycosylated (N-linked (GlcNAc...) asparagine). Residues 728–751 traverse the membrane as a helical segment; sequence DIIPIVAGVVAGIVLIGLALLLIW. Residues 752 to 798 are Cytoplasmic-facing; it reads KLLMIIHDRREFAKFEKEKMNAKWDTGENPIYKSAVATVVNPKYEGK. Tyr783 is subject to Phosphotyrosine.

Belongs to the integrin beta chain family. In terms of assembly, heterodimer of an alpha and a beta subunit.

The protein resides in the cell membrane. It is found in the cell projection. It localises to the invadopodium membrane. The protein localises to the ruffle membrane. Its subcellular location is the melanosome. The protein resides in the cleavage furrow. It is found in the lamellipodium. It localises to the ruffle. In terms of biological role, beta integrins associate with alpha subunits to form receptor complexes that recognize the sequence R-G-D in a wide array of ligands. May be involved in osteoblast compaction. May play role in myoblast differentiation and fusion during skeletal myogenesis. This is Integrin beta-1-B (itgb1-b) from Xenopus laevis (African clawed frog).